Consider the following 287-residue polypeptide: Small ribosomal subunit protein uS2 (287 aa).

Residues Leu-254–Ala-277 show a composition bias toward low complexity. Positions Leu-254–Ser-287 are disordered.

Belongs to the universal ribosomal protein uS2 family.

The polypeptide is Small ribosomal subunit protein uS2 (rpsB) (Mycobacterium tuberculosis (strain CDC 1551 / Oshkosh)).